The following is a 216-amino-acid chain: ATP synthase subunit a (216 aa).

Helical transmembrane passes span 1-21 (MEYS…IFVL), 62-82 (LIAA…VPGF), 88-108 (NINT…FEGF), 119-139 (FMGP…ISHI), 149-169 (LFAN…LVIK), 174-194 (LVVS…AIFI), and 196-216 (TYIF…HEEH).

The protein belongs to the ATPase A chain family. In terms of assembly, F-type ATPases have 2 components, CF(1) - the catalytic core - and CF(0) - the membrane proton channel. CF(1) has five subunits: alpha(3), beta(3), gamma(1), delta(1), epsilon(1). CF(0) has three main subunits: a(1), b(2) and c(9-12). The alpha and beta chains form an alternating ring which encloses part of the gamma chain. CF(1) is attached to CF(0) by a central stalk formed by the gamma and epsilon chains, while a peripheral stalk is formed by the delta and b chains.

Its subcellular location is the cell inner membrane. In terms of biological role, key component of the proton channel; it plays a direct role in the translocation of protons across the membrane. The protein is ATP synthase subunit a of Aquifex aeolicus (strain VF5).